Reading from the N-terminus, the 156-residue chain is Protein LlR18A (156 aa).

The trans-zeatin site is built by Asn-8 and Asp-28. Ca(2+) is bound by residues Pro-32 and Ile-38. Residues Lys-54, Asp-133, and Lys-136 each contribute to the trans-zeatin site.

Belongs to the BetVI family. As to expression, expressed constitutively in roots.

It localises to the cytoplasm. Its subcellular location is the cytosol. In terms of biological role, class II ribonuclease (RNase). Binds to cytokinins. Interacts with melatonin. The protein is Protein LlR18A (LLR18A) of Lupinus luteus (European yellow lupine).